The sequence spans 767 residues: ABC transporter B family member 4 (767 aa).

Residues 81–104 form a disordered region; sequence NYSSSSNSGNNNNNNYNNKNNNNN. Helical transmembrane passes span 208–228, 252–272, 324–344, 350–370, and 429–449; these read IWLF…GLQI, AIFI…MISV, VSLG…LILI, LGMM…AGWL, and IGIF…LVYW. The ABC transmembrane type-1 domain occupies 211–491; sequence FGFGIITAFF…LSILFTQIMS (281 aa). The ABC transporter domain occupies 524-760; it reads IKFINVDFKY…KGLYYKLVQR (237 aa). Residue 559-566 coordinates ATP; it reads GSSGGGKS.

Belongs to the ABC transporter superfamily. ABCB family. Multidrug resistance exporter (TC 3.A.1.201) subfamily.

Its subcellular location is the membrane. This is ABC transporter B family member 4 (abcB4) from Dictyostelium discoideum (Social amoeba).